We begin with the raw amino-acid sequence, 98 residues long: Cuticle protein 67, isoform A (98 aa).

6 tandem repeats follow at residues 7-10, 15-18, 22-25, 79-82, 86-89, and 92-95.

Component of the cuticle of migratory locust which contains more than 100 different structural proteins. The chain is Cuticle protein 67, isoform A from Locusta migratoria (Migratory locust).